The sequence spans 259 residues: Glutamate 5-kinase (259 aa).

An ATP-binding site is contributed by lysine 18. 3 residues coordinate substrate: serine 54, aspartate 141, and asparagine 153. ATP is bound at residue 173 to 174 (SD).

It belongs to the glutamate 5-kinase family.

The protein resides in the cytoplasm. It catalyses the reaction L-glutamate + ATP = L-glutamyl 5-phosphate + ADP. The protein operates within amino-acid biosynthesis; L-proline biosynthesis; L-glutamate 5-semialdehyde from L-glutamate: step 1/2. Its function is as follows. Catalyzes the transfer of a phosphate group to glutamate to form L-glutamate 5-phosphate. The polypeptide is Glutamate 5-kinase (Clavibacter michiganensis subsp. michiganensis (strain NCPPB 382)).